A 219-amino-acid polypeptide reads, in one-letter code: Dynein light chain Tctex-type 4 (219 aa).

The segment at 1 to 84 (MACRTLPSRR…RRPSLGPVPP (84 aa)) is disordered. Positions 9-20 (RRQEEETTKDLA) are enriched in basic and acidic residues. Residue Ser-64 is modified to Phosphoserine.

This sequence belongs to the dynein light chain Tctex-type family. As to quaternary structure, interacts with ENG/endoglin, TGFBR2 and TGFBR3. Interacts with PPP1CC.

The protein resides in the cell projection. The protein localises to the cilium. It localises to the flagellum. Its subcellular location is the cytoplasmic vesicle. It is found in the secretory vesicle. The protein resides in the acrosome. The protein localises to the cytoplasm. It localises to the cytoskeleton. Its subcellular location is the cilium axoneme. It is found in the nucleus. The protein resides in the microtubule organizing center. This chain is Dynein light chain Tctex-type 4 (Dynlt4), found in Mus musculus (Mouse).